A 252-amino-acid chain; its full sequence is Low-density lipoprotein receptor-related protein 5-like protein (252 aa).

5 LDL-receptor class B repeats span residues 3–45 (GHVY…NWVA), 46–88 (RSLY…HPEM), 89–132 (GLTY…DLQE), 133–175 (GKLY…LGDF), and 176–218 (IYWT…DKVV). The tract at residues 223–247 (HADRNGGAATCASSRPTQPGLAAPS) is disordered.

In Homo sapiens (Human), this protein is Low-density lipoprotein receptor-related protein 5-like protein (LRP5L).